The sequence spans 603 residues: MLLAVLLLLPLPSSWFAHGHPLYTRLPPSALQVLSAQGTQALQAAQRSAQWAINRVAMEIQHRSHECRGSGRPRPQALLQDPPEPGPCGERRPSTANVTRAHGRIVGGSAAPPGAWPWLVRLQLGGQPLCGGVLVAASWVLTAAHCFVGAPNELLWTVTLAEGSRGEQAEEVPVNRILPHPKFDPRTFHNDLALVQLWTPVSPGGSARPVCLPQEPQEPPAGTACAIAGWGALFEDGPEAEAVREARVPLLSTDTCRRALGPGLRPSTMLCAGYLAGGVDSCQGDSGGPLTCSEPGPRPREVLFGVTSWGDGCGEPGKPGVYTRVAVFKDWLQEQMSASSSREPSCRELLAWDPPQELQADAARLCAFYARLCPGSQGACARLAHQQCLQRRRRCELRSLAHTLLGLLRNAQELLGPRPGLRRLAPALALPAPALRESPLHPARELRLHSGSRAAGTRFPKRRPEPRGEANGCPGLEPLRQKLAALQGAHAWILQVPSEHLAMNFHEVLADLGSKTLTGLFRAWVRAGLGGRHVAFSGLVGLEPATLARSLPRLLVQALQAFRVAALAEGEPEGPWMDVGQGPGLERKGHHPLNPQVPPARQP.

The signal sequence occupies residues Met-1–Gly-19. The interval Ser-64 to Ala-96 is disordered. The N-linked (GlcNAc...) asparagine glycan is linked to Asn-97. Residues Ile-105–Ser-337 form the Peptidase S1 domain. Residues Cys-130 and Cys-146 are joined by a disulfide bond. Active-site charge relay system residues include His-145 and Asp-191. Cystine bridges form between Cys-225-Cys-292, Cys-256-Cys-271, and Cys-282-Cys-313. The Charge relay system role is filled by Ser-286. 2 disordered regions span residues Pro-442–Pro-474 and Glu-573–Pro-603.

The protein belongs to the peptidase S1 family. As to expression, expressed neural retina, cornea, sclera and optic nerve.

Functionally, serine protease required during eye development. This Homo sapiens (Human) protein is Serine protease 56 (PRSS56).